The sequence spans 368 residues: Mitogen-activated protein kinase HOG1B (368 aa).

The region spanning 20 to 299 is the Protein kinase domain; the sequence is YVNLEPVGMG…ASQALAHPYL (280 aa). Residues 26 to 34 and Lys49 each bind ATP; that span reads VGMGAFGLV. The Proton acceptor role is filled by Asp141. Thr171 bears the Phosphothreonine mark. Residues 171–173 carry the TXY motif; the sequence is TGY. Residue Tyr173 is modified to Phosphotyrosine.

It belongs to the protein kinase superfamily. Ser/Thr protein kinase family. MAP kinase subfamily. HOG1 sub-subfamily. Mg(2+) serves as cofactor. Post-translationally, phosphorylated. Dually phosphorylated on Thr-171 and Tyr-173, which activates the enzyme. Rapidly dephosphorylated upon either hypo- or hyperosmotic shock.

The protein resides in the cytoplasm. Its subcellular location is the nucleus. It carries out the reaction L-seryl-[protein] + ATP = O-phospho-L-seryl-[protein] + ADP + H(+). The enzyme catalyses L-threonyl-[protein] + ATP = O-phospho-L-threonyl-[protein] + ADP + H(+). Its activity is regulated as follows. Activated by tyrosine and threonine phosphorylation. In terms of biological role, mitogen-activated protein kinase involved in a signal transduction pathway that is activated by changes in the osmolarity of the extracellular environment. Controls osmotic regulation of transcription of target genes. This Wallemia ichthyophaga (strain EXF-994 / CBS 113033) protein is Mitogen-activated protein kinase HOG1B (HOG1B).